A 650-amino-acid polypeptide reads, in one-letter code: Macrolide export ATP-binding/permease protein MacB (650 aa).

One can recognise an ABC transporter domain in the interval 5 to 243 (LELKDIRRSY…AGGTEPVVNT (239 aa)). 41 to 48 (GASGSGKS) contacts ATP. 5 consecutive transmembrane segments (helical) span residues 273-293 (LLTM…VVVG), 523-543 (LFLT…VMNI), 554-574 (ANDI…HLFF), 580-600 (VLPA…AFTL), and 613-633 (PLAL…FGWL).

It belongs to the ABC transporter superfamily. Macrolide exporter (TC 3.A.1.122) family. As to quaternary structure, homodimer. Part of the tripartite efflux system MacAB-TolC, which is composed of an inner membrane transporter, MacB, a periplasmic membrane fusion protein, MacA, and an outer membrane component, TolC. The complex forms a large protein conduit and can translocate molecules across both the inner and outer membranes. Interacts with MacA.

It is found in the cell inner membrane. Functionally, part of the tripartite efflux system MacAB-TolC. MacB is a non-canonical ABC transporter that contains transmembrane domains (TMD), which form a pore in the inner membrane, and an ATP-binding domain (NBD), which is responsible for energy generation. Confers resistance against macrolides. The chain is Macrolide export ATP-binding/permease protein MacB from Shigella dysenteriae serotype 1 (strain Sd197).